A 290-amino-acid chain; its full sequence is Eukaryotic translation initiation factor 3 subunit G (290 aa).

2 disordered regions span residues 1–35 (MSRLGNRADWADDEEFDDPSALPPQQVTTNKDGTK) and 157–200 (ESTG…GERM). The RRM domain occupies 210–288 (ATLRVTNVSE…LILRVEFAKR (79 aa)).

It belongs to the eIF-3 subunit G family. As to quaternary structure, component of the eukaryotic translation initiation factor 3 (eIF-3) complex.

The protein localises to the cytoplasm. In terms of biological role, RNA-binding component of the eukaryotic translation initiation factor 3 (eIF-3) complex, which is involved in protein synthesis of a specialized repertoire of mRNAs and, together with other initiation factors, stimulates binding of mRNA and methionyl-tRNAi to the 40S ribosome. The eIF-3 complex specifically targets and initiates translation of a subset of mRNAs involved in cell proliferation. This subunit can bind 18S rRNA. The protein is Eukaryotic translation initiation factor 3 subunit G (tif35) of Aspergillus clavatus (strain ATCC 1007 / CBS 513.65 / DSM 816 / NCTC 3887 / NRRL 1 / QM 1276 / 107).